The chain runs to 360 residues: UDP-N-acetylglucosamine--N-acetylmuramyl-(pentapeptide) pyrophosphoryl-undecaprenol N-acetylglucosamine transferase (360 aa).

UDP-N-acetyl-alpha-D-glucosamine contacts are provided by residues 11–13, N120, R161, S188, and Q282; that span reads TGG.

The protein belongs to the glycosyltransferase 28 family. MurG subfamily.

The protein localises to the cell inner membrane. The catalysed reaction is di-trans,octa-cis-undecaprenyl diphospho-N-acetyl-alpha-D-muramoyl-L-alanyl-D-glutamyl-meso-2,6-diaminopimeloyl-D-alanyl-D-alanine + UDP-N-acetyl-alpha-D-glucosamine = di-trans,octa-cis-undecaprenyl diphospho-[N-acetyl-alpha-D-glucosaminyl-(1-&gt;4)]-N-acetyl-alpha-D-muramoyl-L-alanyl-D-glutamyl-meso-2,6-diaminopimeloyl-D-alanyl-D-alanine + UDP + H(+). It participates in cell wall biogenesis; peptidoglycan biosynthesis. Its function is as follows. Cell wall formation. Catalyzes the transfer of a GlcNAc subunit on undecaprenyl-pyrophosphoryl-MurNAc-pentapeptide (lipid intermediate I) to form undecaprenyl-pyrophosphoryl-MurNAc-(pentapeptide)GlcNAc (lipid intermediate II). In Synechococcus sp. (strain RCC307), this protein is UDP-N-acetylglucosamine--N-acetylmuramyl-(pentapeptide) pyrophosphoryl-undecaprenol N-acetylglucosamine transferase.